The sequence spans 125 residues: Small ribosomal subunit protein uS12m (125 aa).

A disordered region spans residues 1–50 (MPSLNQLIRHGREEKRRTDRTRALDQCPQKQGVCPRVSTRTPKKPNSAPR). The segment covering 10 to 23 (HGREEKRRTDRTRA) has biased composition (basic and acidic residues).

The protein belongs to the universal ribosomal protein uS12 family.

It is found in the mitochondrion. Protein S12 is involved in the translation initiation step. In Petunia hybrida (Petunia), this protein is Small ribosomal subunit protein uS12m (RPS12).